The following is a 64-amino-acid chain: Temporin-ALf (64 aa).

An N-terminal signal peptide occupies residues Met1–Cys22. Positions Glu23–Arg46 are excised as a propeptide. Position 62 is a leucine amide (Leu62).

As to expression, expressed by the skin glands.

It is found in the secreted. Functionally, antimicrobial peptide with activity against Gram-positive and Gram-negative bacteria and against fungi. Has been tested against S.aureus (MIC=2.5 ug/mL), B.pumilus (MIC=5.0 ug/mL), B.cereus (MIC=30.0 ug/mL), E.coli (MIC=2.5 ug/mL), B.dysenteriae (MIC=5.0 ug/mL), A.cacoaceticus (MIC=30.0 ug/mL), P.aeruginosa (MIC=5.0 ug/mL) and C.albicans (MIC=2.5 ug/mL). Also shows a weak hemolytic activity. The protein is Temporin-ALf of Amolops loloensis (Lolokou Sucker Frog).